The following is a 491-amino-acid chain: (S)-canadine synthase (491 aa).

Residues 6 to 26 (LLVCATVAIVFATTTIIRILF) form a helical membrane-spanning segment. Cysteine 434 is a heme binding site.

It belongs to the cytochrome P450 family. Requires heme as cofactor. In terms of tissue distribution, expressed at low levels in roots.

It is found in the endoplasmic reticulum membrane. It localises to the microsome membrane. It carries out the reaction (S)-tetrahydrocolumbamine + reduced [NADPH--hemoprotein reductase] + O2 = (S)-canadine + oxidized [NADPH--hemoprotein reductase] + 2 H2O + H(+). Its function is as follows. Involved in the last but one step of the biosynthesis of berberine, an antimicrobial benzylisoquinoline alkaloid. Converts (S)-tetrahydrocolumbamine (THC) to (S)-tetrahydroberberine (THB) also called (S)-canadine. The chain is (S)-canadine synthase (CYP719A1) from Coptis japonica (Japanese goldthread).